Consider the following 514-residue polypeptide: ATP synthase subunit alpha (514 aa).

170–177 (GDRQIGKT) contacts ATP.

Belongs to the ATPase alpha/beta chains family. F-type ATPases have 2 components, CF(1) - the catalytic core - and CF(0) - the membrane proton channel. CF(1) has five subunits: alpha(3), beta(3), gamma(1), delta(1), epsilon(1). CF(0) has three main subunits: a(1), b(2) and c(9-12). The alpha and beta chains form an alternating ring which encloses part of the gamma chain. CF(1) is attached to CF(0) by a central stalk formed by the gamma and epsilon chains, while a peripheral stalk is formed by the delta and b chains.

The protein localises to the cell inner membrane. It carries out the reaction ATP + H2O + 4 H(+)(in) = ADP + phosphate + 5 H(+)(out). Its function is as follows. Produces ATP from ADP in the presence of a proton gradient across the membrane. The alpha chain is a regulatory subunit. The protein is ATP synthase subunit alpha of Alcanivorax borkumensis (strain ATCC 700651 / DSM 11573 / NCIMB 13689 / SK2).